The primary structure comprises 404 residues: Cysteine desulfurase IscS (404 aa).

Pyridoxal 5'-phosphate is bound by residues 75–76, Asn-155, Gln-183, and 203–205; these read AT and SGH. At Lys-206 the chain carries N6-(pyridoxal phosphate)lysine. Thr-243 is a pyridoxal 5'-phosphate binding site. The active-site Cysteine persulfide intermediate is Cys-328. Residue Cys-328 coordinates [2Fe-2S] cluster.

This sequence belongs to the class-V pyridoxal-phosphate-dependent aminotransferase family. NifS/IscS subfamily. Homodimer. Forms a heterotetramer with IscU, interacts with other sulfur acceptors. The cofactor is pyridoxal 5'-phosphate.

Its subcellular location is the cytoplasm. The catalysed reaction is (sulfur carrier)-H + L-cysteine = (sulfur carrier)-SH + L-alanine. It participates in cofactor biosynthesis; iron-sulfur cluster biosynthesis. Functionally, master enzyme that delivers sulfur to a number of partners involved in Fe-S cluster assembly, tRNA modification or cofactor biosynthesis. Catalyzes the removal of elemental sulfur atoms from cysteine to produce alanine. Functions as a sulfur delivery protein for Fe-S cluster synthesis onto IscU, an Fe-S scaffold assembly protein, as well as other S acceptor proteins. The protein is Cysteine desulfurase IscS of Shewanella oneidensis (strain ATCC 700550 / JCM 31522 / CIP 106686 / LMG 19005 / NCIMB 14063 / MR-1).